The primary structure comprises 197 residues: Probable chorismate pyruvate-lyase (197 aa).

Substrate contacts are provided by R77, L115, and E176.

This sequence belongs to the UbiC family.

The protein resides in the cytoplasm. The enzyme catalyses chorismate = 4-hydroxybenzoate + pyruvate. It participates in cofactor biosynthesis; ubiquinone biosynthesis. Its function is as follows. Removes the pyruvyl group from chorismate, with concomitant aromatization of the ring, to provide 4-hydroxybenzoate (4HB) for the ubiquinone pathway. This chain is Probable chorismate pyruvate-lyase, found in Burkholderia ambifaria (strain ATCC BAA-244 / DSM 16087 / CCUG 44356 / LMG 19182 / AMMD) (Burkholderia cepacia (strain AMMD)).